A 105-amino-acid chain; its full sequence is Large ribosomal subunit protein eL42z/eL42y (105 aa).

The segment at 28 to 57 (YKKGKDSLAAQGKRRYDRKQSGYGGQTKPV) is disordered.

The protein belongs to the eukaryotic ribosomal protein eL42 family.

This Arabidopsis thaliana (Mouse-ear cress) protein is Large ribosomal subunit protein eL42z/eL42y (RPL36AA).